Reading from the N-terminus, the 157-residue chain is Nuclear cap-binding protein subunit 2 (157 aa).

Residues Y17, Y40, 109 to 113 (RADWD), 120 to 124 (RQYGR), and 130 to 131 (QV) contribute to the mRNA site. Residues 37–115 (CTLYVGNLSY…RVIRADWDAG (79 aa)) enclose the RRM domain.

This sequence belongs to the RRM NCBP2 family. As to quaternary structure, component of the nuclear cap-binding complex (CBC), a heterodimer composed of ncbp-1 and ncbp-2 that interacts with m7GpppG-capped RNA.

The protein resides in the nucleus. Its function is as follows. Component of the cap-binding complex (CBC), which binds co-transcriptionally to the 5' cap of pre-mRNAs and is involved in various processes such as pre-mRNA splicing and RNA-mediated gene silencing (RNAi). The CBC complex is involved in miRNA-mediated RNA interference and is required for primary microRNAs (miRNAs) processing. In the CBC complex, ncbp-2 recognizes and binds capped RNAs (m7GpppG-capped RNA) but requires ncbp-1 to stabilize the movement of its N-terminal loop and lock the CBC into a high affinity cap-binding state with the cap structure. The protein is Nuclear cap-binding protein subunit 2 (ncbp-2) of Caenorhabditis briggsae.